The primary structure comprises 445 residues: Amino-acid acetyltransferase (445 aa).

The region spanning 299–438 (EQVRQACIDD…KSLYNYQRRS (140 aa)) is the N-acetyltransferase domain.

It belongs to the acetyltransferase family. ArgA subfamily.

The protein resides in the cytoplasm. The enzyme catalyses L-glutamate + acetyl-CoA = N-acetyl-L-glutamate + CoA + H(+). It participates in amino-acid biosynthesis; L-arginine biosynthesis; N(2)-acetyl-L-ornithine from L-glutamate: step 1/4. This chain is Amino-acid acetyltransferase (argA), found in Vibrio vulnificus (strain CMCP6).